A 137-amino-acid polypeptide reads, in one-letter code: Large ribosomal subunit protein uL16 (137 aa).

This sequence belongs to the universal ribosomal protein uL16 family. In terms of assembly, part of the 50S ribosomal subunit.

Functionally, binds 23S rRNA and is also seen to make contacts with the A and possibly P site tRNAs. This chain is Large ribosomal subunit protein uL16, found in Rhodopseudomonas palustris (strain BisB18).